Reading from the N-terminus, the 79-residue chain is D-alanyl carrier protein (79 aa).

In terms of domain architecture, Carrier spans 1-76; the sequence is MKEQIFDIIE…KIAARVQEKK (76 aa). Position 34 is an O-(pantetheine 4'-phosphoryl)serine (serine 34).

Belongs to the DltC family. In terms of processing, 4'-phosphopantetheine is transferred from CoA to a specific serine of apo-DCP.

The protein resides in the cytoplasm. It participates in cell wall biogenesis; lipoteichoic acid biosynthesis. In terms of biological role, carrier protein involved in the D-alanylation of lipoteichoic acid (LTA). The loading of thioester-linked D-alanine onto DltC is catalyzed by D-alanine--D-alanyl carrier protein ligase DltA. The DltC-carried D-alanyl group is further transferred to cell membrane phosphatidylglycerol (PG) by forming an ester bond, probably catalyzed by DltD. D-alanylation of LTA plays an important role in modulating the properties of the cell wall in Gram-positive bacteria, influencing the net charge of the cell wall. The protein is D-alanyl carrier protein of Lactococcus lactis subsp. lactis (strain IL1403) (Streptococcus lactis).